Consider the following 548-residue polypeptide: Acetylcholine receptor subunit alpha-type des-2 (548 aa).

The first 19 residues, 1-19 (MLIIIQSLLLATTASLCIA), serve as a signal peptide directing secretion. The Extracellular segment spans residues 21–239 (TPVPTQIRLV…LTLYLRRKPL (219 aa)). N52, N96, and N224 each carry an N-linked (GlcNAc...) asparagine glycan. Helical transmembrane passes span 240 to 260 (FYLVNLIIPTSIITLIAIVGF), 274 to 294 (VSLGITTLLSMSILMLMVSDQ), and 301 to 321 (FIPLIGWFILAMIIVISLGTV). Residues 422-460 (LIHLSPTAHQPDESISPSAPPVPSSSPLPPPLTPGPADD) are disordered. The segment covering 439–455 (SAPPVPSSSPLPPPLTP) has biased composition (pro residues). Residues 517 to 537 (FVIFVVAFLIITFGINFIGFI) traverse the membrane as a helical segment. Residues 538–548 (HWHQAGVEYGG) are Cytoplasmic-facing.

Belongs to the ligand-gated ion channel (TC 1.A.9) family. Acetylcholine receptor (TC 1.A.9.1) subfamily. The functional receptor is a heteromer of deg-3 and des-2. Interacts with ric-3; which is required for proper receptor folding.

The protein localises to the cell membrane. Subunit of the non-synaptic neuronal acetylcholine receptor (AChR), which may play a role in chemotaxis towards choline. After binding choline or acetylcholine, the AChR responds by an extensive change in conformation that affects all subunits and leads to opening of an ion-conducting channel across the plasma membrane. The sequence is that of Acetylcholine receptor subunit alpha-type des-2 (des-2) from Caenorhabditis elegans.